A 362-amino-acid polypeptide reads, in one-letter code: dTDP-glucose 4,6-dehydratase (362 aa).

Residues 11–12, 32–35, 58–59, 80–84, and Thr-99 contribute to the NAD(+) site; these read FI, DKLT, DI, and LAAES. Ser-84 is a binding site for substrate. Residue Thr-133 coordinates substrate. Asp-134 functions as the Proton donor in the catalytic mechanism. Residues Glu-135 and Tyr-167 each act as proton acceptor in the active site. NAD(+) is bound at residue 167–171; the sequence is YSASK. Asn-196 lines the substrate pocket. Asn-197 is a binding site for NAD(+). Substrate-binding positions include 206–207, 222–224, Arg-231, Asn-266, and 300–304; these read KL, PVY, and DRPGH.

Belongs to the NAD(P)-dependent epimerase/dehydratase family. dTDP-glucose dehydratase subfamily. NAD(+) serves as cofactor.

The enzyme catalyses dTDP-alpha-D-glucose = dTDP-4-dehydro-6-deoxy-alpha-D-glucose + H2O. It participates in bacterial outer membrane biogenesis; LPS O-antigen biosynthesis. Catalyzes the dehydration of dTDP-D-glucose to form dTDP-4-dehydro-6-deoxy-D-glucose via a three-step process involving oxidation, dehydration and reduction. This reaction is a step in the biosynthesis of D-fucofuranose, a component of E.coli O52 O antigen. This chain is dTDP-glucose 4,6-dehydratase (rmlB), found in Escherichia coli.